The primary structure comprises 63 residues: Large ribosomal subunit protein uL29 (63 aa).

It belongs to the universal ribosomal protein uL29 family.

In Histophilus somni (strain 129Pt) (Haemophilus somnus), this protein is Large ribosomal subunit protein uL29.